Reading from the N-terminus, the 131-residue chain is Biogenesis of lysosome-related organelles complex 1 subunit CNL1 (131 aa).

The interval 1-29 is disordered; it reads MSAPDSNSGHAHDSAQNEGAAEGTRDPFG. Residues 73–101 are a coiled coil; that stretch reads DAIDINIEEMRRILQKCEELETHFDMLDQ.

It belongs to the BLOC1S4 family. Component of the biogenesis of lysosome-related organelles complex-1 (BLOC-1).

It is found in the cytoplasm. Functionally, component of the biogenesis of lysosome-related organelles complex-1 (BLOC-1), a complex that is involved in endosomal cargo sorting. This chain is Biogenesis of lysosome-related organelles complex 1 subunit CNL1 (CLN1), found in Lachancea thermotolerans (strain ATCC 56472 / CBS 6340 / NRRL Y-8284) (Yeast).